The following is a 361-amino-acid chain: tRNA-specific 2-thiouridylase MnmA (361 aa).

ATP is bound by residues 6 to 13 (LVSGGVDS) and Ile-32. Residues 93–95 (NPD) are interaction with target base in tRNA. The active-site Nucleophile is Cys-98. Cys-98 and Cys-193 form a disulfide bridge. Gly-121 contributes to the ATP binding site. An interaction with tRNA region spans residues 143–145 (KDQ). The active-site Cysteine persulfide intermediate is the Cys-193.

The protein belongs to the MnmA/TRMU family.

The protein localises to the cytoplasm. It carries out the reaction S-sulfanyl-L-cysteinyl-[protein] + uridine(34) in tRNA + AH2 + ATP = 2-thiouridine(34) in tRNA + L-cysteinyl-[protein] + A + AMP + diphosphate + H(+). Functionally, catalyzes the 2-thiolation of uridine at the wobble position (U34) of tRNA, leading to the formation of s(2)U34. The polypeptide is tRNA-specific 2-thiouridylase MnmA (Porphyromonas gingivalis (strain ATCC 33277 / DSM 20709 / CIP 103683 / JCM 12257 / NCTC 11834 / 2561)).